A 132-amino-acid polypeptide reads, in one-letter code: Small ribosomal subunit protein uS9 (132 aa).

A disordered region spans residues 100 to 132 (LKSNGLLTRDDRTKERKKPGLKRARKAPQYTKR). Basic residues predominate over residues 114-132 (ERKKPGLKRARKAPQYTKR).

This sequence belongs to the universal ribosomal protein uS9 family.

The polypeptide is Small ribosomal subunit protein uS9 (Dehalococcoides mccartyi (strain ATCC BAA-2100 / JCM 16839 / KCTC 5957 / BAV1)).